A 924-amino-acid chain; its full sequence is Probable dipeptidyl-aminopeptidase B (924 aa).

The interval 1 to 104 is disordered; it reads MPPFTYSDDT…DQRSPGDGQR (104 aa). Residues 1 to 111 lie on the Cytoplasmic side of the membrane; sequence MPPFTYSDDT…GQRMDRSLRR (111 aa). The segment covering 9-23 has biased composition (basic and acidic residues); sequence DTLRSGRDRFRDHSP. A compositionally biased stretch (polar residues) spans 31 to 43; sequence SQETDSSASTTSI. Basic and acidic residues-rich tracts occupy residues 47-58 and 92-104; these read RIQERLDTKEFT and SRSD…DGQR. The chain crosses the membrane as a helical; Signal-anchor for type II membrane protein span at residues 112–132; sequence WLFIVSGVLVATWVIGLFVFV. Over 133 to 924 the chain is Vacuolar; the sequence is SSKAYKPSSS…GMKKRAAPTA (792 aa). N-linked (GlcNAc...) asparagine glycans are attached at residues asparagine 231 and asparagine 364. Residue serine 768 is the Charge relay system of the active site. N-linked (GlcNAc...) asparagine glycosylation occurs at asparagine 827. Catalysis depends on charge relay system residues aspartate 845 and histidine 878.

Belongs to the peptidase S9B family.

It localises to the vacuole membrane. It carries out the reaction Release of an N-terminal dipeptide, Xaa-Yaa-|-Zaa-, from a polypeptide, preferentially when Yaa is Pro, provided Zaa is neither Pro nor hydroxyproline.. Type IV dipeptidyl-peptidase which removes N-terminal dipeptides sequentially from polypeptides having unsubstituted N-termini provided that the penultimate residue is proline. In Sordaria macrospora (strain ATCC MYA-333 / DSM 997 / K(L3346) / K-hell), this protein is Probable dipeptidyl-aminopeptidase B (DAPB).